The primary structure comprises 60 residues: Defensin-like protein 4 (60 aa).

Disulfide bonds link cysteine 4–cysteine 56, cysteine 17–cysteine 41, cysteine 26–cysteine 51, and cysteine 30–cysteine 53.

Belongs to the DEFL family. Protease inhibitor I18 (RTI/MTI-2) subfamily.

The protein localises to the secreted. Functionally, inhibits trypsin and chymotrypsin. The polypeptide is Defensin-like protein 4 (Brassica napus (Rape)).